Here is a 304-residue protein sequence, read N- to C-terminus: Large ribosomal subunit protein uL18z (304 aa).

Residues Leu-285–Glu-304 are disordered. A compositionally biased stretch (acidic residues) spans Ala-294–Glu-304.

This sequence belongs to the universal ribosomal protein uL18 family. In terms of assembly, component of the large ribosomal subunit (LSU).

It is found in the cytoplasm. It localises to the nucleus. Its function is as follows. Component of the ribosome, a large ribonucleoprotein complex responsible for the synthesis of proteins in the cell. The small ribosomal subunit (SSU) binds messenger RNAs (mRNAs) and translates the encoded message by selecting cognate aminoacyl-transfer RNA (tRNA) molecules. The large subunit (LSU) contains the ribosomal catalytic site termed the peptidyl transferase center (PTC), which catalyzes the formation of peptide bonds, thereby polymerizing the amino acids delivered by tRNAs into a polypeptide chain. The nascent polypeptides leave the ribosome through a tunnel in the LSU and interact with protein factors that function in enzymatic processing, targeting, and the membrane insertion of nascent chains at the exit of the ribosomal tunnel. The sequence is that of Large ribosomal subunit protein uL18z (RPL5A) from Oryza sativa subsp. japonica (Rice).